A 420-amino-acid chain; its full sequence is CinA-like protein (420 aa).

It belongs to the CinA family.

The protein is CinA-like protein of Syntrophus aciditrophicus (strain SB).